We begin with the raw amino-acid sequence, 403 residues long: Acetate kinase (403 aa).

Asparagine 13 is a Mg(2+) binding site. Lysine 20 is a binding site for ATP. Arginine 94 serves as a coordination point for substrate. Aspartate 153 serves as the catalytic Proton donor/acceptor. ATP contacts are provided by residues 213-217 (HLGNG), 288-290 (DFR), and 336-340 (GIGEN). A Mg(2+)-binding site is contributed by glutamate 390.

This sequence belongs to the acetokinase family. In terms of assembly, homodimer. Mg(2+) serves as cofactor. The cofactor is Mn(2+).

The protein resides in the cytoplasm. It catalyses the reaction acetate + ATP = acetyl phosphate + ADP. Its pathway is metabolic intermediate biosynthesis; acetyl-CoA biosynthesis; acetyl-CoA from acetate: step 1/2. Its function is as follows. Catalyzes the formation of acetyl phosphate from acetate and ATP. Can also catalyze the reverse reaction. The chain is Acetate kinase from Buchnera aphidicola subsp. Schizaphis graminum (strain Sg).